The chain runs to 103 residues: Transcription factor S (103 aa).

Zn(2+) is bound by residues cysteine 4, cysteine 7, cysteine 20, cysteine 23, cysteine 64, cysteine 67, cysteine 92, and cysteine 95. The C4-type zinc-finger motif lies at 4 to 23; that stretch reads CPKCKSLMIYQGDKLVCRKC. The segment at 60–100 adopts a TFIIS-type zinc-finger fold; it reads TKAICPACGHNEAFWWLRQLRAADESEVRFFRCTKCGKTWR.

It belongs to the archaeal RpoM/eukaryotic RPA12/RPB9/RPC11 RNA polymerase family.

Functionally, induces RNA cleavage activity in the RNA polymerase. In its presence, the cleavage activity of the RNA polymerase truncates the RNA back to position +15 in a stepwise manner by releasing mainly dinucleotides from the 3'-end of the nascent RNA. The truncated RNAs are able to continue elongation. Involved in transcriptional proofreading and fidelity. Misincorporation of nucleotides during elongation of transcription leads to arrested elongation complexes which are rescued by TFS-promoted removal of a dinucleotide from the 3'-end. TFS is able to induce a cleavage resynthesis cycle in stalled elongation complexes (resulting from the next missing nucleotide or a reduced incorporation rate of a wrong nucleotide) preventing misincorporation and enabling proofreading in a post-incorporation manner. Pausing of elongation complexes is the main determinant of TFS-induced RNA cleavage. The sequence is that of Transcription factor S from Archaeoglobus fulgidus (strain ATCC 49558 / DSM 4304 / JCM 9628 / NBRC 100126 / VC-16).